The chain runs to 255 residues: tRNA pseudouridine synthase A (255 aa).

The active-site Nucleophile is Asp-52. Tyr-111 provides a ligand contact to substrate.

This sequence belongs to the tRNA pseudouridine synthase TruA family. In terms of assembly, homodimer.

It catalyses the reaction uridine(38/39/40) in tRNA = pseudouridine(38/39/40) in tRNA. Formation of pseudouridine at positions 38, 39 and 40 in the anticodon stem and loop of transfer RNAs. This chain is tRNA pseudouridine synthase A, found in Cereibacter sphaeroides (strain ATCC 17023 / DSM 158 / JCM 6121 / CCUG 31486 / LMG 2827 / NBRC 12203 / NCIMB 8253 / ATH 2.4.1.) (Rhodobacter sphaeroides).